Reading from the N-terminus, the 454-residue chain is Allantoinase (454 aa).

Residues His-58, His-60, Lys-149, His-189, His-245, and Asp-318 each coordinate Zn(2+). Lys-149 carries the post-translational modification N6-carboxylysine.

The protein belongs to the metallo-dependent hydrolases superfamily. Allantoinase family. Homotetramer. Zn(2+) is required as a cofactor. In terms of processing, carboxylation allows a single lysine to coordinate two zinc ions.

It carries out the reaction (S)-allantoin + H2O = allantoate + H(+). It functions in the pathway nitrogen metabolism; (S)-allantoin degradation; allantoate from (S)-allantoin: step 1/1. Its function is as follows. Catalyzes the conversion of allantoin (5-ureidohydantoin) to allantoic acid by hydrolytic cleavage of the five-member hydantoin ring. This is Allantoinase from Enterococcus faecalis (strain ATCC 700802 / V583).